Reading from the N-terminus, the 188-residue chain is ATP synthase subunit b (188 aa).

The helical transmembrane segment at 7 to 26 (TAAAGAMTLFFASMAYASGD) threads the bilayer.

It belongs to the ATPase B chain family. As to quaternary structure, F-type ATPases have 2 components, F(1) - the catalytic core - and F(0) - the membrane proton channel. F(1) has five subunits: alpha(3), beta(3), gamma(1), delta(1), epsilon(1). F(0) has three main subunits: a(1), b(2) and c(10-14). The alpha and beta chains form an alternating ring which encloses part of the gamma chain. F(1) is attached to F(0) by a central stalk formed by the gamma and epsilon chains, while a peripheral stalk is formed by the delta and b chains.

It localises to the cell inner membrane. F(1)F(0) ATP synthase produces ATP from ADP in the presence of a proton or sodium gradient. F-type ATPases consist of two structural domains, F(1) containing the extramembraneous catalytic core and F(0) containing the membrane proton channel, linked together by a central stalk and a peripheral stalk. During catalysis, ATP synthesis in the catalytic domain of F(1) is coupled via a rotary mechanism of the central stalk subunits to proton translocation. In terms of biological role, component of the F(0) channel, it forms part of the peripheral stalk, linking F(1) to F(0). This Nitratidesulfovibrio vulgaris (strain DP4) (Desulfovibrio vulgaris) protein is ATP synthase subunit b.